Consider the following 103-residue polypeptide: MALTKADLSEHLFNVVGLNKREAKDLVELFFKEISLSLERGEPVKLSGFGNFNLRDKGERPGRNPKTGEEIPITARRVVTFRAGHKLKSRVEKNVKPKEEGES.

Residues 50-72 (GNFNLRDKGERPGRNPKTGEEIP) are disordered. Basic and acidic residues predominate over residues 54 to 69 (LRDKGERPGRNPKTGE).

This sequence belongs to the bacterial histone-like protein family. As to quaternary structure, heterodimer of an alpha and a beta chain.

In terms of biological role, this protein is one of the two subunits of integration host factor, a specific DNA-binding protein that functions in genetic recombination as well as in transcriptional and translational control. The polypeptide is Integration host factor subunit alpha (Coxiella burnetii (strain CbuK_Q154) (Coxiella burnetii (strain Q154))).